The sequence spans 448 residues: Protein giant (448 aa).

Disordered stretches follow at residues 23 to 47 (MHHH…LPVQ), 83 to 134 (QQHQ…ASPT), 238 to 259 (VEAT…RPFK), and 298 to 363 (IRSS…TSSS). Positions 30–47 (HHQQQPLHHLPHSQLPVQ) are enriched in low complexity. The span at 100–112 (DLSRRCDSVETPR) shows a compositional bias: basic and acidic residues. Residues 115 to 134 (PSPYQTSYSYGSGSPSASPT) show a composition bias toward low complexity. The span at 298–310 (IRSSNGGSRTVTN) shows a compositional bias: polar residues. Positions 318-333 (SRSGSVNEGSSSNNNS) are enriched in low complexity. Residues 384 to 447 (DAAYYERRRK…AAFTSAKVTT (64 aa)) enclose the bZIP domain. Residues 390-406 (RRRKNNAAAKKSRDRRR) form a basic motif region. Residues 407-414 (IKEDEIAI) form a leucine-zipper region.

Belongs to the bZIP family. Homodimer or heterodimer. Phosphorylated at multiple sites.

Its subcellular location is the nucleus. Its function is as follows. Represses the expression of both the krueppel and knirps segmentation gap genes. Binds, in vitro, to the krueppel regulatory elements CD1 and CD2. It is required in the early embryo for the development of portions of the head and abdomen. The protein is Protein giant (gt) of Drosophila melanogaster (Fruit fly).